Reading from the N-terminus, the 365-residue chain is Sulfate/thiosulfate import ATP-binding protein CysA (365 aa).

Residues 3–237 (IEIARIKKSF…PATRFVLEFM (235 aa)) form the ABC transporter domain. Position 35–42 (35–42 (GPSGSGKT)) interacts with ATP.

Belongs to the ABC transporter superfamily. Sulfate/tungstate importer (TC 3.A.1.6) family. The complex is composed of two ATP-binding proteins (CysA), two transmembrane proteins (CysT and CysW) and a solute-binding protein (CysP).

The protein localises to the cell inner membrane. It catalyses the reaction sulfate(out) + ATP + H2O = sulfate(in) + ADP + phosphate + H(+). It carries out the reaction thiosulfate(out) + ATP + H2O = thiosulfate(in) + ADP + phosphate + H(+). Part of the ABC transporter complex CysAWTP involved in sulfate/thiosulfate import. Responsible for energy coupling to the transport system. The sequence is that of Sulfate/thiosulfate import ATP-binding protein CysA from Salmonella typhimurium (strain LT2 / SGSC1412 / ATCC 700720).